A 232-amino-acid chain; its full sequence is 7-cyano-7-deazaguanine synthase (232 aa).

Position 8–18 (8–18 (FSGGQDSTTCL)) interacts with ATP. 4 residues coordinate Zn(2+): Cys189, Cys198, Cys201, and Cys204.

This sequence belongs to the QueC family. Zn(2+) serves as cofactor.

The catalysed reaction is 7-carboxy-7-deazaguanine + NH4(+) + ATP = 7-cyano-7-deazaguanine + ADP + phosphate + H2O + H(+). It participates in purine metabolism; 7-cyano-7-deazaguanine biosynthesis. Its function is as follows. Catalyzes the ATP-dependent conversion of 7-carboxy-7-deazaguanine (CDG) to 7-cyano-7-deazaguanine (preQ(0)). This Serratia proteamaculans (strain 568) protein is 7-cyano-7-deazaguanine synthase.